Reading from the N-terminus, the 119-residue chain is Large ribosomal subunit protein bL20 (119 aa).

Belongs to the bacterial ribosomal protein bL20 family.

Functionally, binds directly to 23S ribosomal RNA and is necessary for the in vitro assembly process of the 50S ribosomal subunit. It is not involved in the protein synthesizing functions of that subunit. In Treponema denticola (strain ATCC 35405 / DSM 14222 / CIP 103919 / JCM 8153 / KCTC 15104), this protein is Large ribosomal subunit protein bL20.